A 339-amino-acid chain; its full sequence is MKRRILLLAGGQSGEHEVSLRSARSVLAALPRDQFDVTPVVISKQGRWLPPTETQKALETGVSSQGGDLMLHRAAAAEGYDAVFPLLHGPMGEDGTIQGLLTLAGIPFVGSGVLGSAVSMDKVMTKQVLDSAGIPQVAWRLAVRREWQQTPDAVRARAAELGYPLFVKPANLGSSVGISKVGSPEELDAALTLAFGLDRRVILEAMTPHKPREVEVGILGNDVPVASPVGELSFDADFYDYETKYTEGRAEMHIPARIPPEVSERIRTEALRAFRALDCAGLARVDFFYVEETGELFLNEVNTMPGFTTTSMYPKLFEAAGLSYSELVTRLVELALEER.

The ATP-grasp domain occupies 126-333 (KQVLDSAGIP…YSELVTRLVE (208 aa)). ATP is bound at residue 158-213 (AAELGYPLFVKPANLGSSVGISKVGSPEELDAALTLAFGLDRRVILEAMTPHKPRE). Mg(2+) is bound by residues aspartate 286, glutamate 300, and asparagine 302.

The protein belongs to the D-alanine--D-alanine ligase family. Mg(2+) serves as cofactor. It depends on Mn(2+) as a cofactor.

The protein localises to the cytoplasm. It catalyses the reaction 2 D-alanine + ATP = D-alanyl-D-alanine + ADP + phosphate + H(+). The protein operates within cell wall biogenesis; peptidoglycan biosynthesis. In terms of biological role, cell wall formation. This Deinococcus radiodurans (strain ATCC 13939 / DSM 20539 / JCM 16871 / CCUG 27074 / LMG 4051 / NBRC 15346 / NCIMB 9279 / VKM B-1422 / R1) protein is D-alanine--D-alanine ligase.